We begin with the raw amino-acid sequence, 287 residues long: 2-dehydro-3-deoxyphosphooctonate aldolase (287 aa).

This sequence belongs to the KdsA family.

Its subcellular location is the cytoplasm. It catalyses the reaction D-arabinose 5-phosphate + phosphoenolpyruvate + H2O = 3-deoxy-alpha-D-manno-2-octulosonate-8-phosphate + phosphate. Its pathway is carbohydrate biosynthesis; 3-deoxy-D-manno-octulosonate biosynthesis; 3-deoxy-D-manno-octulosonate from D-ribulose 5-phosphate: step 2/3. It participates in bacterial outer membrane biogenesis; lipopolysaccharide biosynthesis. The protein is 2-dehydro-3-deoxyphosphooctonate aldolase of Nitrobacter hamburgensis (strain DSM 10229 / NCIMB 13809 / X14).